We begin with the raw amino-acid sequence, 271 residues long: uncharacterized protein (271 aa).

A DOD-type homing endonuclease domain is found at 77–205 (IIGVYFGDAN…SKELLKKLDV (129 aa)).

This is an uncharacterized protein from Methanocaldococcus jannaschii (strain ATCC 43067 / DSM 2661 / JAL-1 / JCM 10045 / NBRC 100440) (Methanococcus jannaschii).